Consider the following 406-residue polypeptide: Probable endo-xylogalacturonan hydrolase A (406 aa).

The signal sequence occupies residues 1-18 (MLYYRNLALLSLLSLSSA). PbH1 repeat units lie at residues 183–213 (AKDVTFTNLRMDATSRSDNPPKNTDGFDIGS), 214–235 (STHVTISSVSVSNDDDCVALKP), 237–257 (CNYVTVENVTCTGSHGISVGS), and 299–320 (VKNVTFSDFNVRGCDYAFQIQS). The active-site Proton donor is D228. The N-linked (GlcNAc...) asparagine glycan is linked to N244. H251 is an active-site residue. N301 carries an N-linked (GlcNAc...) asparagine glycan.

This sequence belongs to the glycosyl hydrolase 28 family.

The protein resides in the secreted. In terms of biological role, pectinolytic enzyme involved in the degradation of xylogalacturonan (xga), a galacturonan backbone heavily substituted with xylose, and which is one important component of the hairy regions of pectin. Activity requires a galacturonic acid backbone substituted with xylose. This chain is Probable endo-xylogalacturonan hydrolase A (xghA), found in Neosartorya fischeri (strain ATCC 1020 / DSM 3700 / CBS 544.65 / FGSC A1164 / JCM 1740 / NRRL 181 / WB 181) (Aspergillus fischerianus).